The chain runs to 231 residues: Ion-translocating oxidoreductase complex subunit E (231 aa).

6 consecutive transmembrane segments (helical) span residues 18–38 (ALVQ…ATNA), 39–59 (LGLG…ISTL), 63–83 (TPAE…VSAV), 86–106 (LINA…PLIV), 125–145 (ALSA…MFVL), and 182–202 (PFLL…MLAG).

Belongs to the NqrDE/RnfAE family. In terms of assembly, the complex is composed of six subunits: RsxA, RsxB, RsxC, RsxD, RsxE and RsxG.

It is found in the cell inner membrane. Functionally, part of a membrane-bound complex that couples electron transfer with translocation of ions across the membrane. Required to maintain the reduced state of SoxR. This Escherichia coli O6:H1 (strain CFT073 / ATCC 700928 / UPEC) protein is Ion-translocating oxidoreductase complex subunit E.